Consider the following 387-residue polypeptide: 1-deoxy-D-xylulose 5-phosphate reductoisomerase (387 aa).

Positions 11, 12, 13, 14, 37, 38, 39, and 125 each coordinate NADPH. Lys126 lines the 1-deoxy-D-xylulose 5-phosphate pocket. Position 127 (Glu127) interacts with NADPH. A Mn(2+)-binding site is contributed by Asp151. 1-deoxy-D-xylulose 5-phosphate contacts are provided by Ser152, Glu153, Ser177, and His200. A Mn(2+)-binding site is contributed by Glu153. Gly206 contacts NADPH. 4 residues coordinate 1-deoxy-D-xylulose 5-phosphate: Ser213, Asn218, Lys219, and Glu222. A Mn(2+)-binding site is contributed by Glu222.

The protein belongs to the DXR family. Mg(2+) is required as a cofactor. The cofactor is Mn(2+).

The enzyme catalyses 2-C-methyl-D-erythritol 4-phosphate + NADP(+) = 1-deoxy-D-xylulose 5-phosphate + NADPH + H(+). It participates in isoprenoid biosynthesis; isopentenyl diphosphate biosynthesis via DXP pathway; isopentenyl diphosphate from 1-deoxy-D-xylulose 5-phosphate: step 1/6. In terms of biological role, catalyzes the NADPH-dependent rearrangement and reduction of 1-deoxy-D-xylulose-5-phosphate (DXP) to 2-C-methyl-D-erythritol 4-phosphate (MEP). The sequence is that of 1-deoxy-D-xylulose 5-phosphate reductoisomerase from Desulforamulus reducens (strain ATCC BAA-1160 / DSM 100696 / MI-1) (Desulfotomaculum reducens).